A 372-amino-acid polypeptide reads, in one-letter code: Enoyl-[acyl-carrier-protein] reductase, mitochondrial (372 aa).

The transit peptide at 1 to 18 (MSFFKTAVRRFSSTSITR) directs the protein to the mitochondrion. Residue tyrosine 72 is the Proton donor of the active site. NADP(+) contacts are provided by residues asparagine 157, 183–186 (NSMV), 206–208 (RNR), 279–282 (FGGM), 304–306 (FWV), and lysine 365.

It belongs to the zinc-containing alcohol dehydrogenase family. Quinone oxidoreductase subfamily. As to quaternary structure, homodimer.

It localises to the mitochondrion matrix. The enzyme catalyses a 2,3-saturated acyl-[ACP] + NADP(+) = a (2E)-enoyl-[ACP] + NADPH + H(+). Functionally, catalyzes the NADPH-dependent reduction of trans-2-enoyl thioesters in mitochondrial fatty acid synthesis (fatty acid synthesis type II). Fatty acid chain elongation in mitochondria uses acyl carrier protein (ACP) as an acyl group carrier, but the enzyme accepts both ACP and CoA thioesters as substrates in vitro. Required for respiration and the maintenance of the mitochondrial compartment. In Schizosaccharomyces pombe (strain 972 / ATCC 24843) (Fission yeast), this protein is Enoyl-[acyl-carrier-protein] reductase, mitochondrial (etr1).